The primary structure comprises 189 residues: GTP cyclohydrolase 1 (189 aa).

Residues Cys78, His81, and Cys150 each coordinate Zn(2+).

Belongs to the GTP cyclohydrolase I family. As to quaternary structure, homomer.

It catalyses the reaction GTP + H2O = 7,8-dihydroneopterin 3'-triphosphate + formate + H(+). It functions in the pathway cofactor biosynthesis; 7,8-dihydroneopterin triphosphate biosynthesis; 7,8-dihydroneopterin triphosphate from GTP: step 1/1. The chain is GTP cyclohydrolase 1 from Bacillus anthracis (strain A0248).